Here is a 148-residue protein sequence, read N- to C-terminus: Protein Turandot Z (148 aa).

A signal peptide spans 1-23 (MYFAIRLSFVLAVLFCLTGNGSA).

This sequence belongs to the Turandot family.

Its subcellular location is the secreted. Its function is as follows. A humoral factor that may play a role in stress tolerance. This chain is Protein Turandot Z, found in Drosophila sechellia (Fruit fly).